The chain runs to 447 residues: Probable glycine dehydrogenase (decarboxylating) subunit 1 (447 aa).

The protein belongs to the GcvP family. N-terminal subunit subfamily. The glycine cleavage system is composed of four proteins: P, T, L and H. In this organism, the P 'protein' is a heterodimer of two subunits.

The catalysed reaction is N(6)-[(R)-lipoyl]-L-lysyl-[glycine-cleavage complex H protein] + glycine + H(+) = N(6)-[(R)-S(8)-aminomethyldihydrolipoyl]-L-lysyl-[glycine-cleavage complex H protein] + CO2. In terms of biological role, the glycine cleavage system catalyzes the degradation of glycine. The P protein binds the alpha-amino group of glycine through its pyridoxal phosphate cofactor; CO(2) is released and the remaining methylamine moiety is then transferred to the lipoamide cofactor of the H protein. This is Probable glycine dehydrogenase (decarboxylating) subunit 1 from Beijerinckia indica subsp. indica (strain ATCC 9039 / DSM 1715 / NCIMB 8712).